A 337-amino-acid polypeptide reads, in one-letter code: Putative high mobility group B protein 11 (337 aa).

The ARID domain maps to 34–125 (VRNPELFWEM…MLFEFEHLYY (92 aa)). 2 disordered regions span residues 197–221 (TKRG…QRTG) and 298–337 (AGTS…EVSQ). The segment at residues 215 to 282 (PKRQRTGYNF…RYKMEILQYR (68 aa)) is a DNA-binding region (HMG box). Residues 319 to 329 (TDACTSASSAA) are compositionally biased toward low complexity.

Belongs to the HMGB family.

The protein resides in the nucleus. Functionally, binds preferentially DNA with A/T-rich content. The protein is Putative high mobility group B protein 11 (HMGB11) of Arabidopsis thaliana (Mouse-ear cress).